A 642-amino-acid polypeptide reads, in one-letter code: Threonine--tRNA ligase (642 aa).

A TGS domain is found at 1 to 61; sequence MPIITLPDGS…EEDASLEIIT (61 aa). Residues 244-535 form a catalytic region; sequence DHRKIGKQLD…LIEEYAGFFP (292 aa). The Zn(2+) site is built by Cys335, His386, and His512.

Belongs to the class-II aminoacyl-tRNA synthetase family. As to quaternary structure, homodimer. Zn(2+) serves as cofactor.

The protein localises to the cytoplasm. It carries out the reaction tRNA(Thr) + L-threonine + ATP = L-threonyl-tRNA(Thr) + AMP + diphosphate + H(+). Its function is as follows. Catalyzes the attachment of threonine to tRNA(Thr) in a two-step reaction: L-threonine is first activated by ATP to form Thr-AMP and then transferred to the acceptor end of tRNA(Thr). Also edits incorrectly charged L-seryl-tRNA(Thr). The chain is Threonine--tRNA ligase from Vibrio vulnificus (strain CMCP6).